The following is a 562-amino-acid chain: Serine palmitoyltransferase 2 (562 aa).

A helical transmembrane segment spans residues 67–87 (PMLVAVLTYVGYGVLTLFGYL). The residue at position 379 (lysine 379) is an N6-(pyridoxal phosphate)lysine.

The protein belongs to the class-II pyridoxal-phosphate-dependent aminotransferase family. In terms of assembly, component of the serine palmitoyltransferase (SPT) complex, which is composed of SPTLC1, SPTLC2 or SPTLC3 and SPTSSA or SPTSSB. The heterodimer consisting of SPTLC1 and SPTLC2/SPTLC3 forms the catalytic core of the enzyme, while SPTSSA or SPTSSB subunits determine substrate specificity. SPT also interacts with ORMDL proteins, especially ORMDL3, which negatively regulate SPT activity in the presence of ceramides. Forms dimers of heterodimers with SPTLC1. Pyridoxal 5'-phosphate is required as a cofactor. In terms of tissue distribution, widely expressed.

It localises to the endoplasmic reticulum membrane. The catalysed reaction is L-serine + hexadecanoyl-CoA + H(+) = 3-oxosphinganine + CO2 + CoA. It carries out the reaction octadecanoyl-CoA + L-serine + H(+) = 3-oxoeicosasphinganine + CO2 + CoA. It functions in the pathway lipid metabolism; sphingolipid metabolism. SPT complex catalytic activity is negatively regulated by ORMDL proteins, including ORMDL3, in the presence of ceramides. This mechanism allows to maintain ceramide levels at sufficient concentrations for the production of complex sphingolipids, but which prevents the accumulation of ceramides to levels that trigger apoptosis. Functionally, component of the serine palmitoyltransferase multisubunit enzyme (SPT) that catalyzes the initial and rate-limiting step in sphingolipid biosynthesis by condensing L-serine and activated acyl-CoA (most commonly palmitoyl-CoA) to form long-chain bases. The SPT complex is composed of SPTLC1, SPTLC2 or SPTLC3 and SPTSSA or SPTSSB. Within this complex, the heterodimer consisting of SPTLC1 and SPTLC2/SPTLC3 forms the catalytic core. The composition of the serine palmitoyltransferase (SPT) complex determines the substrate preference. The SPTLC1-SPTLC2-SPTSSA complex shows a strong preference for C16-CoA substrate, while the SPTLC1-SPTLC3-SPTSSA isozyme uses both C14-CoA and C16-CoA as substrates, with a slight preference for C14-CoA. The SPTLC1-SPTLC2-SPTSSB complex shows a strong preference for C18-CoA substrate, while the SPTLC1-SPTLC3-SPTSSB isozyme displays an ability to use a broader range of acyl-CoAs, without apparent preference. Crucial for adipogenesis. The chain is Serine palmitoyltransferase 2 from Homo sapiens (Human).